The chain runs to 153 residues: Large ribosomal subunit protein uL15 (153 aa).

The disordered stretch occupies residues 21-41 (RGIGSGKGKTGGRGIKGQKSR). The span at 23–35 (IGSGKGKTGGRGI) shows a compositional bias: gly residues.

This sequence belongs to the universal ribosomal protein uL15 family. As to quaternary structure, part of the 50S ribosomal subunit.

Its function is as follows. Binds to the 23S rRNA. The chain is Large ribosomal subunit protein uL15 from Rickettsia africae (strain ESF-5).